The sequence spans 119 residues: Beta-2-microglobulin (119 aa).

The N-terminal stretch at 1–20 (MSRSVALAVLALLSLSGLEA) is a signal peptide. The 90-residue stretch at 25–114 (PKIQVYSRHP…VTLSGPRTVK (90 aa)) folds into the Ig-like C1-type domain. Cysteines 45 and 100 form a disulfide.

It belongs to the beta-2-microglobulin family. In terms of assembly, heterodimer of an alpha chain and a beta chain. Beta-2-microglobulin is the beta-chain of major histocompatibility complex class I molecules.

The protein localises to the secreted. Functionally, component of the class I major histocompatibility complex (MHC). Involved in the presentation of peptide antigens to the immune system. The sequence is that of Beta-2-microglobulin (B2M) from Papio anubis (Olive baboon).